Here is a 105-residue protein sequence, read N- to C-terminus: Large ribosomal subunit protein eL30 (105 aa).

This sequence belongs to the eukaryotic ribosomal protein eL30 family.

The sequence is that of Large ribosomal subunit protein eL30 (RPL30) from Eremothecium gossypii (strain ATCC 10895 / CBS 109.51 / FGSC 9923 / NRRL Y-1056) (Yeast).